Reading from the N-terminus, the 138-residue chain is 1,4-dihydroxy-2-naphthoyl-CoA hydrolase (138 aa).

Residue Asp13 is part of the active site.

This sequence belongs to the 4-hydroxybenzoyl-CoA thioesterase family. DHNA-CoA hydrolase subfamily.

It catalyses the reaction 1,4-dihydroxy-2-naphthoyl-CoA + H2O = 1,4-dihydroxy-2-naphthoate + CoA + H(+). The protein operates within cofactor biosynthesis; phylloquinone biosynthesis. It participates in quinol/quinone metabolism; 1,4-dihydroxy-2-naphthoate biosynthesis; 1,4-dihydroxy-2-naphthoate from chorismate: step 7/7. Its function is as follows. Catalyzes the hydrolysis of 1,4-dihydroxy-2-naphthoyl-CoA (DHNA-CoA) to 1,4-dihydroxy-2-naphthoate (DHNA), a reaction involved in phylloquinone (vitamin K1) biosynthesis. The protein is 1,4-dihydroxy-2-naphthoyl-CoA hydrolase of Microcystis aeruginosa (strain NIES-843 / IAM M-2473).